The chain runs to 327 residues: Zinc transport protein ZntB (327 aa).

Topologically, residues Met1–Met273 are cytoplasmic. The chain crosses the membrane as a helical span at residues Ala274–Ile294. Residues Pro295–His300 lie on the Periplasmic side of the membrane. A helical transmembrane segment spans residues Leu301–Leu321. Over His322–Leu327 the chain is Cytoplasmic.

It belongs to the CorA metal ion transporter (MIT) (TC 1.A.35) family.

It is found in the cell inner membrane. The enzyme catalyses Zn(2+)(out) + H(+)(out) = Zn(2+)(in) + H(+)(in). In terms of biological role, zinc transporter. Acts as a Zn(2+):proton symporter, which likely mediates zinc ion uptake. This chain is Zinc transport protein ZntB, found in Klebsiella pneumoniae subsp. pneumoniae (strain ATCC 700721 / MGH 78578).